Consider the following 374-residue polypeptide: 5-pentadecatrienyl resorcinol O-methyltransferase (374 aa).

Residues Asp239, Asp261, Met262, and Lys275 each contribute to the S-adenosyl-L-methionine site. His279 functions as the Proton acceptor in the catalytic mechanism.

Belongs to the class I-like SAM-binding methyltransferase superfamily. Cation-independent O-methyltransferase family. COMT subfamily. As to quaternary structure, homodimer. In terms of tissue distribution, expressed predominantly in root hairs.

The enzyme catalyses (8Z,11Z)-5-(pentadeca-8,11,14-trien-1-yl)resorcinol + S-adenosyl-L-methionine = (8Z,11Z)-5-(pentadeca- 8,11,14-trien-1-yl)resorcinol-3-methyl ether + S-adenosyl-L-homocysteine + H(+). Its function is as follows. O-methyltransferase involved in the biosynthetic pathway of the phytotoxin sorgoleone, a potent broad-spectrum inhibitor active against many agronomically important monocot and dicot weed species. Substrate specificity for alkylresorcinols. Strong preference for a five carbons alkyl side chain. This Sorghum bicolor (Sorghum) protein is 5-pentadecatrienyl resorcinol O-methyltransferase (OMT3).